A 218-amino-acid chain; its full sequence is Vacuolar protein-sorting-associated protein 37 homolog 2 (218 aa).

The interval 1–51 is disordered; it reads MFNFWGSKEQQQGQSRPSPEASATPWYSPSLVTSPSSSRPQTSGQIPSHVS. The segment covering 8–17 has biased composition (polar residues); the sequence is KEQQQGQSRP. Over residues 28-40 the composition is skewed to low complexity; it reads SPSLVTSPSSSRP. A VPS37 C-terminal domain is found at 137 to 218; the sequence is QEKLNELENQ…HLAAKTSSIG (82 aa).

This sequence belongs to the VPS37 family. Component of the endosomal sorting required for transport complex I (ESCRT-I), composed of ELC, VPS28 and VPS37. Interacts with ELC.

It localises to the endosome. Functionally, component of the ESCRT-I complex (endosomal sorting complex required for transport I), a regulator of vesicular trafficking process. Required for the sorting of endocytic ubiquitinated cargos into multivesicular bodies (MVBs). The polypeptide is Vacuolar protein-sorting-associated protein 37 homolog 2 (VPS37-2) (Arabidopsis thaliana (Mouse-ear cress)).